Reading from the N-terminus, the 429-residue chain is Glucose-1-phosphate adenylyltransferase (429 aa).

Alpha-D-glucose 1-phosphate contacts are provided by residues Gly162, 177–178, and Ser209; that span reads EK.

Belongs to the bacterial/plant glucose-1-phosphate adenylyltransferase family. As to quaternary structure, homotetramer.

It catalyses the reaction alpha-D-glucose 1-phosphate + ATP + H(+) = ADP-alpha-D-glucose + diphosphate. The protein operates within glycan biosynthesis; glycogen biosynthesis. Involved in the biosynthesis of ADP-glucose, a building block required for the elongation reactions to produce glycogen. Catalyzes the reaction between ATP and alpha-D-glucose 1-phosphate (G1P) to produce pyrophosphate and ADP-Glc. The chain is Glucose-1-phosphate adenylyltransferase from Gloeothece citriformis (strain PCC 7424) (Cyanothece sp. (strain PCC 7424)).